A 690-amino-acid polypeptide reads, in one-letter code: ATP-dependent DNA helicase Hel308 (690 aa).

Residues glutamine 26 and 45–52 (IPTASGKT) each bind ATP. The 157-residue stretch at 32–188 (AGYLESEDNY…WLDARVVEHD (157 aa)) folds into the Helicase ATP-binding domain. The short motif at 133–136 (DEFH) is the DEAH box element. Positions 208–417 (EKNDVVLKVL…NRDALYRQII (210 aa)) constitute a Helicase C-terminal domain.

It belongs to the helicase family. Hel308 subfamily. In terms of assembly, monomer. Binds replication protein A (RPA), in presence and absence of DNA.

It carries out the reaction Couples ATP hydrolysis with the unwinding of duplex DNA by translocating in the 3'-5' direction.. The catalysed reaction is ATP + H2O = ADP + phosphate + H(+). Functionally, DNA-dependent ATPase and 3'-5' DNA helicase that may be involved in repair of stalled replication forks. Helicase with 3'-to 5'- polarity; able to unwind over 100 bp of DNA at 50 degrees Celsius. Unwinds forked DNA, preferentially on lagging strand forks; has weaker activity on Holliday junctions. Displaces the invading strand in DNA D-loops. Unwinds short oligonucleotides from dsDNA with 3'- but not blunt ends or 5'-ssDNA tails in an ATP-dependent manner. ATPase activity is stimulated by ssDNA but not dsDNA, protein binds ssDNA, dsDNA with 5'- or 3'-overhangs but not blunt ended dsDNA and replication forks. Replication forks bind both this protein and RPA. RPA does not stimulate the helicase activity of this protein. This is ATP-dependent DNA helicase Hel308 from Methanothermobacter thermautotrophicus (strain ATCC 29096 / DSM 1053 / JCM 10044 / NBRC 100330 / Delta H) (Methanobacterium thermoautotrophicum).